A 211-amino-acid chain; its full sequence is MPHGHSHDHGGCGHEATDVDHALEMGIEYSLYTKIDAENLECLNEETEGSGKTVFKPYESRQDMSKFVQSDADEELLFNIPFTGNIKLKGIIICGANDDSHPNKVKIFKNRPKMTFDDAKVKVDQEFELTRDPRGEIEYSPKVVNFSSVHHLTLYFPSNFGDDKTRIYYIGLRGEFSEAHYHGVTICNYEARANAADHKDKVFDGVGRAIQ.

Residues 20–192 (DHALEMGIEY…GVTICNYEAR (173 aa)) enclose the PITH domain.

It belongs to the PITHD1 family.

This is PITH domain-containing protein GA19395 from Drosophila pseudoobscura pseudoobscura (Fruit fly).